The primary structure comprises 509 residues: MSIKTEEISSLIKKQLANYQDKVSVEETGTVTYVGDGVARADGLDNAMAGELLEFSNGVYGMAQNLESNDVGIVILGDYTGIREGDTVKRTGRIMEVPVGDALLGRVVDSLGRPIDGLGEIKTDKTRPIERKAPGVMERKSVSVPLQTGIKVIDALVPIGRGQRELIIGDRKTGKTAIALDTIINQKNQDVICIYVAIGQKESTVRASVETLRKYGALDYTIVVSASASNPAPMLYIAPYAGAAMGEEFMFNGKDVLIVYDDLSKQADAYRELSLILRRPPGREAYPGDIFYTHSRLLERAARLSDDLGGGSMTALPIIQTQAGDVSAYIPTNVISITDGQIFLDSDEFYAGQRPAIDAGTSVSRVGGDAQIKAMKKVAGTLRLDIASYNELASFAQFGSDLDAATQAKLARGQRTMEVLKQGLHDPLPVEEQVVTLFALSRGFIDKVEIEDVQRYESELAAYMHANHQDLYDTIKKTGKLPEGDDLQNAVAKFSETFQGTKKQVAEEK.

169-176 (GDRKTGKT) is a binding site for ATP.

Belongs to the ATPase alpha/beta chains family. As to quaternary structure, F-type ATPases have 2 components, CF(1) - the catalytic core - and CF(0) - the membrane proton channel. CF(1) has five subunits: alpha(3), beta(3), gamma(1), delta(1), epsilon(1). CF(0) has three main subunits: a(1), b(2) and c(9-12). The alpha and beta chains form an alternating ring which encloses part of the gamma chain. CF(1) is attached to CF(0) by a central stalk formed by the gamma and epsilon chains, while a peripheral stalk is formed by the delta and b chains.

The protein resides in the cell membrane. The enzyme catalyses ATP + H2O + 4 H(+)(in) = ADP + phosphate + 5 H(+)(out). Produces ATP from ADP in the presence of a proton gradient across the membrane. The alpha chain is a regulatory subunit. This chain is ATP synthase subunit alpha, found in Limosilactobacillus reuteri (strain DSM 20016) (Lactobacillus reuteri).